Here is a 172-residue protein sequence, read N- to C-terminus: MATDFTKYIASVPDYPEKGIMFRDISPLMADGQAFHAATDEIVAYAKDKDVEMVVGPEARGFIVGCPVAYEMGIGFAPARKEGKLPRETVKASYDLEYGQSALYLHKDAIKPGQKVLVTDDLLATGGTIGATIQLVEDLGGIVVGTAFLIELQDLHGRDKLKGYDIFSLMQY.

The protein belongs to the purine/pyrimidine phosphoribosyltransferase family. Homodimer.

The protein resides in the cytoplasm. The enzyme catalyses AMP + diphosphate = 5-phospho-alpha-D-ribose 1-diphosphate + adenine. It functions in the pathway purine metabolism; AMP biosynthesis via salvage pathway; AMP from adenine: step 1/1. Functionally, catalyzes a salvage reaction resulting in the formation of AMP, that is energically less costly than de novo synthesis. This Levilactobacillus brevis (strain ATCC 367 / BCRC 12310 / CIP 105137 / JCM 1170 / LMG 11437 / NCIMB 947 / NCTC 947) (Lactobacillus brevis) protein is Adenine phosphoribosyltransferase.